The sequence spans 161 residues: Insulin-like growth factor 1, juvenile form (161 aa).

The segment at 45-73 is b; the sequence is GPETLCGAELVDTLQFVCGDRGFYFSKPT. Cystine bridges form between Cys-50/Cys-92, Cys-62/Cys-105, and Cys-91/Cys-96. Residues 74 to 85 are c; sequence GYGPSSRRSHNR. Residues 86-106 are a; it reads GIVDECCFQSCELRRLEMYCA. A d region spans residues 107–114; that stretch reads PVKPGKTP. The interval 111 to 161 is disordered; that stretch reads GKTPRSVRAQRHTDSPRTAKKPLPGQSHSSYKEVHQKNSSRGNTGGRNYRI. The propeptide at 115–161 is e peptide; it reads RSVRAQRHTDSPRTAKKPLPGQSHSSYKEVHQKNSSRGNTGGRNYRI.

The protein belongs to the insulin family.

Its subcellular location is the secreted. Its function is as follows. The insulin-like growth factors, isolated from plasma, are structurally and functionally related to insulin but have a much higher growth-promoting activity. Acts as a ligand for IGF1R. Binds to the alpha subunit of IGF1R, leading to the activation of the intrinsic tyrosine kinase activity which autophosphorylates tyrosine residues in the beta subunit thus initiatiating a cascade of down-stream signaling events leading to activation of the PI3K-AKT/PKB and the Ras-MAPK pathways. Binds to integrins. Its binding to integrins and subsequent ternary complex formation with integrins and IGFR1 are essential for IGF1 signaling. This chain is Insulin-like growth factor 1, juvenile form, found in Cyprinus carpio (Common carp).